The chain runs to 521 residues: Cytochrome P450 monooxygenase 105 (521 aa).

A helical transmembrane segment spans residues 12–32 (GVASPATLAVAAVTFLTALVL). Residues Asn-218, Asn-274, and Asn-317 are each glycosylated (N-linked (GlcNAc...) asparagine). Residue Cys-449 participates in heme binding.

This sequence belongs to the cytochrome P450 family. Heme serves as cofactor.

It localises to the membrane. The protein operates within secondary metabolite biosynthesis. Cytochrome P450 monooxygenase that is able to use anthracene, carbazole, pyrene, phenanthrene and trans-stilbene as substrates for oxidation. These multifunctional properties against a series of polycyclic aromatic hydrocarbons (PAHs) suggest that CYP105 would play important roles, at least in part, in fungal metabolic systems involved in xenobiotic detoxification. This is Cytochrome P450 monooxygenase 105 from Postia placenta (strain ATCC 44394 / Madison 698-R) (Brown rot fungus).